The sequence spans 419 residues: Histidine--tRNA ligase (419 aa).

The protein belongs to the class-II aminoacyl-tRNA synthetase family. Homodimer.

The protein localises to the cytoplasm. The catalysed reaction is tRNA(His) + L-histidine + ATP = L-histidyl-tRNA(His) + AMP + diphosphate + H(+). The protein is Histidine--tRNA ligase of Methylobacillus flagellatus (strain ATCC 51484 / DSM 6875 / VKM B-1610 / KT).